The chain runs to 111 residues: Ig kappa chain V-III region CBPC 101 (111 aa).

A framework-1 region spans residues 1–23; it reads DIVLTQSPASLAVSLGQRATISC. C23 and C92 form a disulfide bridge. The complementarity-determining-1 stretch occupies residues 24–38; it reads KASQSVDYTGESYMN. The framework-2 stretch occupies residues 39–53; that stretch reads WYQQNPGQSPKLLIY. Residues 54 to 60 form a complementarity-determining-2 region; the sequence is AASNLES. Residues 61–92 form a framework-3 region; that stretch reads GIPARFSGSGSGTDFTLNIHPVEEEDAATYYC. A complementarity-determining-3 region spans residues 93–101; it reads QQSNEDPYT. The interval 102-111 is framework-4; it reads FGGGTKLEIK.

The sequence is that of Ig kappa chain V-III region CBPC 101 from Mus musculus (Mouse).